We begin with the raw amino-acid sequence, 107 residues long: Anaphase-promoting complex subunit 14 (107 aa).

As to quaternary structure, the APC/C is composed of at least 13 subunits: apc1, apc2, nuc2, apc4, apc5, cut9, apc8, apc10, apc11, hcn1, apc13, apc14 and apc15.

It localises to the ascus epiplasm. In terms of biological role, component of the anaphase promoting complex/cyclosome (APC/C), a cell cycle-regulated E3 ubiquitin-protein ligase complex that controls progression through mitosis and the G1 phase of the cell cycle. The APC/C is thought to confer substrate specificity and, in the presence of ubiquitin-conjugating E2 enzymes, it catalyzes the formation of protein-ubiquitin conjugates that are subsequently degraded by the 26S proteasome. Appears to play a role in spore wall formation. The polypeptide is Anaphase-promoting complex subunit 14 (Schizosaccharomyces pombe (strain 972 / ATCC 24843) (Fission yeast)).